The primary structure comprises 140 residues: MAGWNAYIDNLMADGTCQDAAIVGYKDSPSVWAAVPGKTFVNITPAEVGILVGKDRSSFFVNGLTLGGQKCSVIRDSLLQDGEFTMDLRTKSTGGAPTFNITVTMTAKTLVLLMGKEGVHGGMINKKCYEMASHLRRSQY.

The residue at position 2 (Ala-2) is an N-acetylalanine. Phosphoserine is present on Ser-28. Lys-54 participates in a covalent cross-link: Glycyl lysine isopeptide (Lys-Gly) (interchain with G-Cter in SUMO2); alternate. Lys-54 is covalently cross-linked (Glycyl lysine isopeptide (Lys-Gly) (interchain with G-Cter in ubiquitin); alternate). Ser-57 carries the phosphoserine modification. Residue Lys-108 is modified to N6-acetyllysine. A Phosphotyrosine modification is found at Tyr-129. Position 138 is a phosphoserine; by ROCK1 (Ser-138).

Belongs to the profilin family. In terms of assembly, found in a complex with XPO6, Ran, ACTB and PFN1. Interacts with ACTB. Interacts with VASP. Interacts with HTT. Interacts with SH3BGRL. Occurs in many kinds of cells as a complex with monomeric actin in a 1:1 ratio. Interacts with ACTMAP. In terms of processing, phosphorylation at Ser-138 reduces its affinity for G-actin and blocks its interaction with HTT, reducing its ability to inhibit androgen receptor (AR) and HTT aggregation.

The protein resides in the cytoplasm. It is found in the cytoskeleton. In terms of biological role, binds to actin and affects the structure of the cytoskeleton. At high concentrations, profilin prevents the polymerization of actin, whereas it enhances it at low concentrations. By binding to PIP2, it inhibits the formation of IP3 and DG. Inhibits androgen receptor (AR) and HTT aggregation and binding of G-actin is essential for its inhibition of AR. In Bos taurus (Bovine), this protein is Profilin-1 (PFN1).